Reading from the N-terminus, the 201-residue chain is 3-isopropylmalate dehydratase small subunit (201 aa).

It belongs to the LeuD family. LeuD type 1 subfamily. As to quaternary structure, heterodimer of LeuC and LeuD.

The catalysed reaction is (2R,3S)-3-isopropylmalate = (2S)-2-isopropylmalate. The protein operates within amino-acid biosynthesis; L-leucine biosynthesis; L-leucine from 3-methyl-2-oxobutanoate: step 2/4. In terms of biological role, catalyzes the isomerization between 2-isopropylmalate and 3-isopropylmalate, via the formation of 2-isopropylmaleate. This is 3-isopropylmalate dehydratase small subunit from Allorhizobium ampelinum (strain ATCC BAA-846 / DSM 112012 / S4) (Agrobacterium vitis (strain S4)).